The sequence spans 443 residues: MGQGPSGGLNRQGDRKPDGGDKKEKKFEPAAPPARVGRKQRKQKGPEAAARLPTVTPSTKCKLRLLKLERIKDYLLMEEEFVANQERLKPQEEKAEEDRSKVDDLRGTPMSVGNLEELIDENHAIVSSSVGPEYYVGILSFVDKDQLEPGCSILMHNKVLSVVGILQDEVDPMVSVMKVEKAPLESYADIGGLEAQIQEIKEAVELPLTHPELYEDIGIKPPKGVILYGEPGTGKTLLAKAVANSTSATFLRVVGSELIQKYLGDGPKLVRELFRVADDLSPSIVFIDEIDAVGTKRYDAHSGGEREIQRTMLELLNQLDGFDSRGDVKVILATNRIESLDPALLRPGRIDRKIEFPLPDIKTRRRIFQIHTSKMTLSEDVNLEEFVMTKDEFSGADIKAICTEAGLLALRERRMKVTHPDFKKAKEKVMFKKKEGVPEGLYM.

Disordered regions lie at residues Met1 to Val55 and Arg87 to Thr108. Composition is skewed to basic and acidic residues over residues Gln12–Glu28 and Arg87–Arg106. Gly229 to Thr236 contacts ATP. Residues Lys296 and Lys433 each participate in a glycyl lysine isopeptide (Lys-Gly) (interchain with G-Cter in ubiquitin) cross-link.

It belongs to the AAA ATPase family. As to quaternary structure, component of the 19S regulatory particle (RP/PA700) base subcomplex of the 26S proteasome. The 26S proteasome is composed of a core protease (CP), known as the 20S proteasome, capped at one or both ends by the 19S regulatory particle (RP/PA700). The RP/PA700 complex is composed of at least 17 different subunits in two subcomplexes, the base and the lid, which form the portions proximal and distal to the 20S proteolytic core, respectively. Required for innate immunity. Interacts with UNI. As to expression, preferentially expressed in the root and shoot apical meristem.

The protein resides in the cytoplasm. It is found in the P-body. The protein localises to the nucleus. The 26S protease is involved in the ATP-dependent degradation of ubiquitinated proteins. The regulatory (or ATPase) complex confers ATP dependency and substrate specificity to the 26S complex. Interacts with transit peptides of proteins targeted to the chloroplast, and may be involved in the degradation of unimported plastid protein precursors. Is required for the maintenance of postembryonic root and shoot meristems. Has a specific role in the regulation of organs size. Acts redundantly with RPT2B in the regulation of gametogenesis. With RPT2B plays a critical role in 26S proteasome assembly. Acts as an upstream signaling component for inducing both defense and morphological phenotypes in the constitutive active uni-1D mutant. Acts as a negative regulator of endoreduplication in trichome cells. May function after the completion of the third endoreduplication step (8C to 16C) mediated by RHL1. Acts as a negative regulator of transcriptional gene silencing (TGS) at specific endogenous genes through DNA methylation. Promotes post-transcriptional gene silencing (PTGS) by limiting the degradation of transgene aberrant RNAs by the RNA quality control (RQC) machinery, thus favoring their entry into cytoplasmic siRNA bodies where they can trigger PTGS. Involved in tolerance to zinc deficiency, possibly through alleviation of oxidative stresses or processing of poly-ubiquitinated proteins. Required for resistance to the fungal pathogen Golovinomyces cichoracearum. This chain is 26S proteasome regulatory subunit 4 homolog A, found in Arabidopsis thaliana (Mouse-ear cress).